Reading from the N-terminus, the 285-residue chain is Undecaprenyl-diphosphatase (285 aa).

Transmembrane regions (helical) follow at residues 12–34, 49–69, 93–113, 120–140, 159–179, 234–254, and 263–283; these read IVIA…HAVI, IFLP…LVYF, IHIL…GGLL, LFGT…LLLL, LTYA…LPGI, VATI…AFLM, and WALS…FFIL.

Belongs to the UppP family.

Its subcellular location is the cell inner membrane. The catalysed reaction is di-trans,octa-cis-undecaprenyl diphosphate + H2O = di-trans,octa-cis-undecaprenyl phosphate + phosphate + H(+). Functionally, catalyzes the dephosphorylation of undecaprenyl diphosphate (UPP). Confers resistance to bacitracin. This chain is Undecaprenyl-diphosphatase, found in Gluconacetobacter diazotrophicus (strain ATCC 49037 / DSM 5601 / CCUG 37298 / CIP 103539 / LMG 7603 / PAl5).